The sequence spans 180 residues: NADH-quinone oxidoreductase subunit I (180 aa).

4Fe-4S ferredoxin-type domains follow at residues 50–80 (LTRD…LQKA) and 90–119 (EFFR…LTPD). [4Fe-4S] cluster contacts are provided by C60, C63, C66, C70, C99, C102, C105, and C109.

Belongs to the complex I 23 kDa subunit family. As to quaternary structure, NDH-1 is composed of 13 different subunits. Subunits NuoA, H, J, K, L, M, N constitute the membrane sector of the complex. [4Fe-4S] cluster serves as cofactor.

It is found in the cell inner membrane. The enzyme catalyses a quinone + NADH + 5 H(+)(in) = a quinol + NAD(+) + 4 H(+)(out). Its function is as follows. NDH-1 shuttles electrons from NADH, via FMN and iron-sulfur (Fe-S) centers, to quinones in the respiratory chain. The immediate electron acceptor for the enzyme in this species is believed to be ubiquinone. Couples the redox reaction to proton translocation (for every two electrons transferred, four hydrogen ions are translocated across the cytoplasmic membrane), and thus conserves the redox energy in a proton gradient. In Shigella boydii serotype 4 (strain Sb227), this protein is NADH-quinone oxidoreductase subunit I.